The following is a 515-amino-acid chain: Cytoplasmic tRNA 2-thiolation protein 2 (515 aa).

2 disordered regions span residues 1–24 and 188–217; these read MCQV…RPSR and LGAG…ARPP. The residue at position 2 (C2) is an N-acetylcysteine. A phosphoserine mark is found at S415, S419, S435, and S508.

It belongs to the CTU2/NCS2 family. As to quaternary structure, component of a complex at least composed of URM1, CTU2/NCS2 and CTU1/ATPBD3.

Its subcellular location is the cytoplasm. Its pathway is tRNA modification; 5-methoxycarbonylmethyl-2-thiouridine-tRNA biosynthesis. Plays a central role in 2-thiolation of mcm(5)S(2)U at tRNA wobble positions of tRNA(Lys), tRNA(Glu) and tRNA(Gln). May act by forming a heterodimer with CTU1/ATPBD3 that ligates sulfur from thiocarboxylated URM1 onto the uridine of tRNAs at wobble position. The chain is Cytoplasmic tRNA 2-thiolation protein 2 from Homo sapiens (Human).